The primary structure comprises 71 residues: Small ribosomal subunit protein bS21 (71 aa).

Residues 48-59 are compositionally biased toward basic residues; sequence KAAAAVKRHAKK. Residues 48–71 are disordered; it reads KAAAAVKRHAKKVQRENRKFQRLY. Positions 60–71 are enriched in basic and acidic residues; sequence VQRENRKFQRLY.

This sequence belongs to the bacterial ribosomal protein bS21 family.

The protein is Small ribosomal subunit protein bS21 of Teredinibacter turnerae (strain ATCC 39867 / T7901).